Reading from the N-terminus, the 1025-residue chain is Protein mono-ADP-ribosyltransferase PARP10 (1025 aa).

Thr101 carries the post-translational modification Phosphothreonine. At Glu106 the chain carries ADP-ribosyl glutamic acid. N6-(ADP-ribosyl)lysine is present on Lys140. The disordered stretch occupies residues 318–346 (GIMTTGSGQEPGQSGTSLRTGPMGSLGQA). Residues 321 to 336 (TTGSGQEPGQSGTSLR) show a composition bias toward polar residues. 3 positions are modified to phosphoserine: Ser378, Ser423, and Ser431. 2 disordered regions span residues 569–589 (VLPG…DQED) and 617–644 (LEEE…APST). Residues 617–639 (LEEEGPQEQPEEEVTPGHEEEEP) show a composition bias toward acidic residues. Short sequence motifs (ubiquitin-interacting) lie at residues 650–667 (LEEE…LEPQ) and 673–690 (QEEA…LLEQ). Residue Ser663 is modified to Phosphoserine. A myc binding region spans residues 700–907 (DGGTDGKAQL…CAHGFNRSFC (208 aa)). In terms of domain architecture, PARP catalytic spans 806-1025 (PTLAGQTLKG…SGLPGRSPDT (220 aa)). Positions 831–838 (QEVVRAFY) match the PIP-box motif. Glu882 is modified (ADP-ribosyl glutamic acid). Lys916 carries the post-translational modification N6-(ADP-ribosyl)lysine. At Lys916 the chain carries N6-acetyllysine. Positions 1006–1025 (HVPRASPDDPSGLPGRSPDT) are disordered. Ser1011 is subject to Phosphoserine.

Belongs to the ARTD/PARP family. Interacts with MYC. Interacts with PARP14. Interacts (via-PIP box and ubiquitin-interacting motifs) with PCNA. In terms of processing, stimulated through its phosphorylation by CDK2. Acquires CDK-dependent phosphorylation through late-G1 to S phase, and from prometaphase to cytokinesis in the nucleolar organizing regions. Phosphorylation is suppressed in growth-arrested cells. Post-translationally, auto-mono-ADP-ribosylated on glutamate and lysine residues. As to expression, highly expressed in spleen and thymus. Intermediate levels in liver, kidney, pancreas, prostate, testis, ovary, intestine, and leukocytes. Low expression in heart, brain, placenta, lung, skeletal muscle, and colon.

The protein localises to the nucleus. It is found in the nucleolus. Its subcellular location is the cytoplasm. The catalysed reaction is L-lysyl-[protein] + NAD(+) = N(6)-(ADP-D-ribosyl)-L-lysyl-[protein] + nicotinamide + H(+). The enzyme catalyses L-aspartyl-[protein] + NAD(+) = 4-O-(ADP-D-ribosyl)-L-aspartyl-[protein] + nicotinamide. It catalyses the reaction L-glutamyl-[protein] + NAD(+) = 5-O-(ADP-D-ribosyl)-L-glutamyl-[protein] + nicotinamide. In terms of biological role, ADP-ribosyltransferase that mediates mono-ADP-ribosylation of glutamate and aspartate residues on target proteins. In contrast to PARP1 and PARP2, it is not able to mediate poly-ADP-ribosylation. Catalyzes mono-ADP-ribosylation of GSK3B, leading to negatively regulate GSK3B kinase activity. Involved in translesion DNA synthesis in response to DNA damage via its interaction with PCNA. In Homo sapiens (Human), this protein is Protein mono-ADP-ribosyltransferase PARP10.